We begin with the raw amino-acid sequence, 278 residues long: Undecaprenyl-diphosphatase (278 aa).

The next 8 helical transmembrane spans lie at glycine 14–phenylalanine 34, glycine 40–tryptophan 60, tryptophan 89–isoleucine 109, threonine 121–glutamate 141, leucine 153–valine 173, phenylalanine 196–leucine 216, valine 227–leucine 247, and serine 257–alanine 277.

This sequence belongs to the UppP family.

It localises to the cell membrane. The enzyme catalyses di-trans,octa-cis-undecaprenyl diphosphate + H2O = di-trans,octa-cis-undecaprenyl phosphate + phosphate + H(+). Its function is as follows. Catalyzes the dephosphorylation of undecaprenyl diphosphate (UPP). Confers resistance to bacitracin. The chain is Undecaprenyl-diphosphatase from Thermomicrobium roseum (strain ATCC 27502 / DSM 5159 / P-2).